Reading from the N-terminus, the 351-residue chain is Phosphate acyltransferase (351 aa).

It belongs to the PlsX family. Homodimer. Probably interacts with PlsY.

It is found in the cytoplasm. The catalysed reaction is a fatty acyl-[ACP] + phosphate = an acyl phosphate + holo-[ACP]. Its pathway is lipid metabolism; phospholipid metabolism. Its function is as follows. Catalyzes the reversible formation of acyl-phosphate (acyl-PO(4)) from acyl-[acyl-carrier-protein] (acyl-ACP). This enzyme utilizes acyl-ACP as fatty acyl donor, but not acyl-CoA. This chain is Phosphate acyltransferase, found in Neisseria meningitidis serogroup B (strain ATCC BAA-335 / MC58).